A 347-amino-acid polypeptide reads, in one-letter code: Glycerol-1-phosphate dehydrogenase [NAD(P)+] (347 aa).

Residues 94 to 98 (GKVID) and 116 to 119 (TAAS) contribute to the NAD(+) site. Residue D121 coordinates substrate. S125 is an NAD(+) binding site. D168 lines the substrate pocket. Zn(2+) is bound by residues D168 and H248. A substrate-binding site is contributed by H252. H264 lines the Zn(2+) pocket.

It belongs to the glycerol-1-phosphate dehydrogenase family. As to quaternary structure, homooctamer. It depends on Zn(2+) as a cofactor.

It is found in the cytoplasm. It carries out the reaction sn-glycerol 1-phosphate + NAD(+) = dihydroxyacetone phosphate + NADH + H(+). The enzyme catalyses sn-glycerol 1-phosphate + NADP(+) = dihydroxyacetone phosphate + NADPH + H(+). The protein operates within membrane lipid metabolism; glycerophospholipid metabolism. Its activity is regulated as follows. Partially inhibited by divalent metal cations such as Co(2+), Cu(2+) and Ni(2+). Functionally, catalyzes the NAD(P)H-dependent reduction of dihydroxyacetonephosphate (DHAP or glycerone phosphate) to glycerol 1-phosphate (G1P). The G1P thus generated is used as the glycerophosphate backbone of phospholipids in the cellular membranes of Archaea. Is also able to catalyze the reverse reaction, i.e. the NAD(P)(+)-dependent oxidation of G1P but not of G3P. Is not active toward glycerol, dihydroxyacetone, glyceraldehyde-3-phosphate, glyceraldehyde and glycerol-2-phosphate. In Methanothermobacter thermautotrophicus (strain ATCC 29096 / DSM 1053 / JCM 10044 / NBRC 100330 / Delta H) (Methanobacterium thermoautotrophicum), this protein is Glycerol-1-phosphate dehydrogenase [NAD(P)+] (egsA).